The following is a 490-amino-acid chain: B3 domain-containing protein LOC_Os12g40080 (490 aa).

Residues 24-117 (GKSFIKVMIT…HFKVWIYDPS (94 aa)) constitute a DNA-binding region (TF-B3 1). Positions 161–191 (SGHSKETSEINPANSPSWKPTERVPSSEELD) are disordered. Residues 169–178 (EINPANSPSW) are compositionally biased toward polar residues. 2 consecutive DNA-binding regions (TF-B3) follow at residues 236–331 (FYIT…FHPL) and 389–487 (VAVM…IRKS).

It localises to the nucleus. This is B3 domain-containing protein LOC_Os12g40080 from Oryza sativa subsp. japonica (Rice).